The chain runs to 223 residues: Ribosomal RNA small subunit methyltransferase G (223 aa).

S-adenosyl-L-methionine is bound by residues Gly-82, Leu-87, 133-134, and Arg-151; that span reads AE.

The protein belongs to the methyltransferase superfamily. RNA methyltransferase RsmG family.

It localises to the cytoplasm. Specifically methylates the N7 position of guanine in position 518 of 16S rRNA. In Corynebacterium glutamicum (strain R), this protein is Ribosomal RNA small subunit methyltransferase G.